The sequence spans 200 residues: uncharacterized protein (200 aa).

Low complexity-rich tracts occupy residues 1-13 and 28-44; these read MTSA…AAES and PSPA…AGPR. 2 disordered regions span residues 1 to 116 and 137 to 200; these read MTSA…GGPG and LPRD…SSFF. Residues 88-102 show a composition bias toward basic residues; the sequence is RCGRPRRRDPRRRRT. Low complexity predominate over residues 189–200; it reads PSSSSGLLSSFF.

This is an uncharacterized protein from Homo sapiens (Human).